Here is a 273-residue protein sequence, read N- to C-terminus: Outer surface protein A (273 aa).

The signal sequence occupies residues 1–16 (MKKYLLGIGLILALIA). Cys17 is lipidated: N-palmitoyl cysteine. The S-diacylglycerol cysteine moiety is linked to residue Cys17.

This sequence belongs to the OspA lipoprotein family.

Its subcellular location is the cell outer membrane. It is found in the cell surface. This Borreliella burgdorferi (strain N40) (Borrelia burgdorferi) protein is Outer surface protein A.